We begin with the raw amino-acid sequence, 365 residues long: S-adenosylmethionine:tRNA ribosyltransferase-isomerase (365 aa).

The protein belongs to the QueA family. In terms of assembly, monomer.

The protein localises to the cytoplasm. It carries out the reaction 7-aminomethyl-7-carbaguanosine(34) in tRNA + S-adenosyl-L-methionine = epoxyqueuosine(34) in tRNA + adenine + L-methionine + 2 H(+). The protein operates within tRNA modification; tRNA-queuosine biosynthesis. Transfers and isomerizes the ribose moiety from AdoMet to the 7-aminomethyl group of 7-deazaguanine (preQ1-tRNA) to give epoxyqueuosine (oQ-tRNA). The protein is S-adenosylmethionine:tRNA ribosyltransferase-isomerase of Rickettsia rickettsii (strain Iowa).